A 378-amino-acid chain; its full sequence is Transaldolase 1 (378 aa).

Lys-146 (schiff-base intermediate with substrate) is an active-site residue.

This sequence belongs to the transaldolase family. Type 2 subfamily.

The protein localises to the cytoplasm. The catalysed reaction is D-sedoheptulose 7-phosphate + D-glyceraldehyde 3-phosphate = D-erythrose 4-phosphate + beta-D-fructose 6-phosphate. It functions in the pathway carbohydrate degradation; pentose phosphate pathway; D-glyceraldehyde 3-phosphate and beta-D-fructose 6-phosphate from D-ribose 5-phosphate and D-xylulose 5-phosphate (non-oxidative stage): step 2/3. Functionally, transaldolase is important for the balance of metabolites in the pentose-phosphate pathway. This chain is Transaldolase 1, found in Streptomyces avermitilis (strain ATCC 31267 / DSM 46492 / JCM 5070 / NBRC 14893 / NCIMB 12804 / NRRL 8165 / MA-4680).